A 120-amino-acid chain; its full sequence is Seripauperin-2 (120 aa).

Residues Ile7–Leu24 form a helical membrane-spanning segment.

This sequence belongs to the SRP1/TIP1 family. Seripauperin subfamily.

Its subcellular location is the membrane. This Saccharomyces cerevisiae (strain ATCC 204508 / S288c) (Baker's yeast) protein is Seripauperin-2 (PAU2).